Consider the following 203-residue polypeptide: Transcriptional regulator GfcR (203 aa).

Belongs to the purine/pyrimidine phosphoribosyltransferase family. GfcR subfamily.

In Methanococcoides burtonii (strain DSM 6242 / NBRC 107633 / OCM 468 / ACE-M), this protein is Transcriptional regulator GfcR.